The primary structure comprises 510 residues: D-alanine--D-alanyl carrier protein ligase (510 aa).

Residue 157–158 coordinates ATP; it reads TS. Position 202 (Asp202) interacts with D-alanine. 297 to 302 contacts ATP; sequence NTYGPT. Val306 lines the D-alanine pocket. 2 residues coordinate ATP: Asp389 and Lys498. Lys498 serves as a coordination point for D-alanine.

It belongs to the ATP-dependent AMP-binding enzyme family. DltA subfamily.

Its subcellular location is the cytoplasm. It carries out the reaction holo-[D-alanyl-carrier protein] + D-alanine + ATP = D-alanyl-[D-alanyl-carrier protein] + AMP + diphosphate. It functions in the pathway cell wall biogenesis; lipoteichoic acid biosynthesis. Its function is as follows. Catalyzes the first step in the D-alanylation of lipoteichoic acid (LTA), the activation of D-alanine and its transfer onto the D-alanyl carrier protein (Dcp) DltC. In an ATP-dependent two-step reaction, forms a high energy D-alanyl-AMP intermediate, followed by transfer of the D-alanyl residue as a thiol ester to the phosphopantheinyl prosthetic group of the Dcp. D-alanylation of LTA plays an important role in modulating the properties of the cell wall in Gram-positive bacteria, influencing the net charge of the cell wall. The chain is D-alanine--D-alanyl carrier protein ligase from Listeria monocytogenes serovar 1/2a (strain ATCC BAA-679 / EGD-e).